The following is a 359-amino-acid chain: Putative nucleotidyltransferase MAB21L1 (359 aa).

Residues 23 to 24 (RK) and 63 to 66 (YEGL) contribute to the a ribonucleoside 5'-triphosphate site. Mg(2+) contacts are provided by Glu73 and Glu75. A ribonucleoside 5'-triphosphate is bound by residues Lys248 and 252-255 (SLLK).

It belongs to the mab-21 family. In terms of assembly, monomer. Homodecamer; composed of 2 back to back homopentamers. The protein may exist as monomer in solution and oiligomerizes upon ligand binding.

It is found in the nucleus. Functionally, putative nucleotidyltransferase required for several aspects of embryonic development including normal development of the eye. It is unclear whether it displays nucleotidyltransferase activity in vivo. Binds single-stranded RNA (ssRNA). This Xenopus laevis (African clawed frog) protein is Putative nucleotidyltransferase MAB21L1 (mab21l1).